Reading from the N-terminus, the 226-residue chain is Transmembrane protein 204 (226 aa).

Topologically, residues 1-5 are cytoplasmic; the sequence is MTVRK. The chain crosses the membrane as a helical span at residues 6 to 26; the sequence is VVATAVLVALVSLVLNNAAAF. The Extracellular segment spans residues 27 to 103; sequence TPNWVYQTLE…LQFDMMRACN (77 aa). A helical membrane pass occupies residues 104–124; sequence LVATAALAAGQLTFVLGLTGL. The Cytoplasmic segment spans residues 125–136; sequence PLLSPDAQCWEE. The chain crosses the membrane as a helical span at residues 137-157; the sequence is AMAAAFQLASFVLVIGLVTFY. Residues 158-170 lie on the Extracellular side of the membrane; the sequence is RIGPYTSLSWSCY. A helical membrane pass occupies residues 171-191; the sequence is LNIGACLLATLAAAMLIWNVL. Topologically, residues 192-226 are cytoplasmic; it reads HRREDCTAPRVIVISRSLTARFRRGLDNDYVESPC.

Its subcellular location is the cell junction. The protein resides in the adherens junction. It localises to the cell membrane. Can influence paracellular permeability. Appears to be involved in cell-cell interactions through adherens. This Bos taurus (Bovine) protein is Transmembrane protein 204 (TMEM204).